Consider the following 227-residue polypeptide: Probable methylthioribulose-1-phosphate dehydratase (227 aa).

Cysteine 87 contributes to the substrate binding site. Zn(2+) is bound by residues histidine 105 and histidine 107. Glutamate 129 functions as the Proton donor/acceptor in the catalytic mechanism. Residue histidine 185 coordinates Zn(2+).

The protein belongs to the aldolase class II family. MtnB subfamily. Zn(2+) serves as cofactor.

Its subcellular location is the cytoplasm. The catalysed reaction is 5-(methylsulfanyl)-D-ribulose 1-phosphate = 5-methylsulfanyl-2,3-dioxopentyl phosphate + H2O. It participates in amino-acid biosynthesis; L-methionine biosynthesis via salvage pathway; L-methionine from S-methyl-5-thio-alpha-D-ribose 1-phosphate: step 2/6. Catalyzes the dehydration of methylthioribulose-1-phosphate (MTRu-1-P) into 2,3-diketo-5-methylthiopentyl-1-phosphate (DK-MTP-1-P). This chain is Probable methylthioribulose-1-phosphate dehydratase, found in Drosophila melanogaster (Fruit fly).